A 69-amino-acid chain; its full sequence is MNQGNQAFENARKPFRRANLITALGLGAFAFATFAYSVYRVHEDTFEDVVMTPELEKKIAEDRDLSKKN.

At 1-19 the chain is on the mitochondrial matrix side; it reads MNQGNQAFENARKPFRRAN. A helical transmembrane segment spans residues 20-42; it reads LITALGLGAFAFATFAYSVYRVH. Residues 43-69 lie on the Mitochondrial intermembrane side of the membrane; sequence EDTFEDVVMTPELEKKIAEDRDLSKKN.

It belongs to the COA3 family. In terms of assembly, component of 250-400 kDa complexes called cytochrome oxidase assembly intermediates or COA complexes.

It is found in the mitochondrion inner membrane. Functionally, required for assembly of cytochrome c oxidase (complex IV). The sequence is that of Cytochrome c oxidase assembly factor 3, mitochondrial (coa3) from Schizosaccharomyces pombe (strain 972 / ATCC 24843) (Fission yeast).